Consider the following 372-residue polypeptide: tRNA 2-selenouridine synthase (372 aa).

Positions 19 to 142 (LASGHPIMDV…MRQYLIDTID (124 aa)) constitute a Rhodanese domain. The S-selanylcysteine intermediate role is filled by C102.

It belongs to the SelU family. Monomer.

It carries out the reaction 5-methylaminomethyl-2-thiouridine(34) in tRNA + selenophosphate + (2E)-geranyl diphosphate + H2O + H(+) = 5-methylaminomethyl-2-selenouridine(34) in tRNA + (2E)-thiogeraniol + phosphate + diphosphate. It catalyses the reaction 5-methylaminomethyl-2-thiouridine(34) in tRNA + (2E)-geranyl diphosphate = 5-methylaminomethyl-S-(2E)-geranyl-thiouridine(34) in tRNA + diphosphate. The enzyme catalyses 5-methylaminomethyl-S-(2E)-geranyl-thiouridine(34) in tRNA + selenophosphate + H(+) = 5-methylaminomethyl-2-(Se-phospho)selenouridine(34) in tRNA + (2E)-thiogeraniol. The catalysed reaction is 5-methylaminomethyl-2-(Se-phospho)selenouridine(34) in tRNA + H2O = 5-methylaminomethyl-2-selenouridine(34) in tRNA + phosphate. Functionally, involved in the post-transcriptional modification of the uridine at the wobble position (U34) of tRNA(Lys), tRNA(Glu) and tRNA(Gln). Catalyzes the conversion of 2-thiouridine (S2U-RNA) to 2-selenouridine (Se2U-RNA). Acts in a two-step process involving geranylation of 2-thiouridine (S2U) to S-geranyl-2-thiouridine (geS2U) and subsequent selenation of the latter derivative to 2-selenouridine (Se2U) in the tRNA chain. This is tRNA 2-selenouridine synthase from Shewanella loihica (strain ATCC BAA-1088 / PV-4).